The primary structure comprises 642 residues: Threonine--tRNA ligase (642 aa).

In terms of domain architecture, TGS spans 1-61 (MPVITLPDGS…ENDATLSIIT (61 aa)). Residues 243–534 (DHRKIGKQLD…LTEEFAGFFP (292 aa)) are catalytic. Residues cysteine 334, histidine 385, and histidine 511 each contribute to the Zn(2+) site.

The protein belongs to the class-II aminoacyl-tRNA synthetase family. Homodimer. Zn(2+) is required as a cofactor.

The protein localises to the cytoplasm. It catalyses the reaction tRNA(Thr) + L-threonine + ATP = L-threonyl-tRNA(Thr) + AMP + diphosphate + H(+). In terms of biological role, catalyzes the attachment of threonine to tRNA(Thr) in a two-step reaction: L-threonine is first activated by ATP to form Thr-AMP and then transferred to the acceptor end of tRNA(Thr). Also edits incorrectly charged L-seryl-tRNA(Thr). The sequence is that of Threonine--tRNA ligase from Salmonella paratyphi A (strain ATCC 9150 / SARB42).